A 346-amino-acid polypeptide reads, in one-letter code: SUMO-activating enzyme subunit 1 (346 aa).

M1 carries the N-acetylmethionine modification. Residue V2 is modified to N-acetylvaline; in SUMO-activating enzyme subunit 1, N-terminally processed. A Phosphoserine modification is found at S12. Position 198 is an N6-acetyllysine (K198).

Belongs to the ubiquitin-activating E1 family. In terms of assembly, heterodimer of SAE1 and UBA2/SAE2. The heterodimer corresponds to the two domains that are encoded on a single polypeptide chain in ubiquitin-activating enzyme E1. Interacts with UBE2I.

Its subcellular location is the nucleus. Its pathway is protein modification; protein sumoylation. Functionally, the heterodimer acts as an E1 ligase for SUMO1, SUMO2, SUMO3, and probably SUMO4. It mediates ATP-dependent activation of SUMO proteins followed by formation of a thioester bond between a SUMO protein and a conserved active site cysteine residue on UBA2/SAE2. The protein is SUMO-activating enzyme subunit 1 (SAE1) of Bos taurus (Bovine).